A 101-amino-acid chain; its full sequence is Large ribosomal subunit protein uL23 (101 aa).

This sequence belongs to the universal ribosomal protein uL23 family. In terms of assembly, part of the 50S ribosomal subunit. Contacts protein L29, and trigger factor when it is bound to the ribosome.

Its function is as follows. One of the early assembly proteins it binds 23S rRNA. One of the proteins that surrounds the polypeptide exit tunnel on the outside of the ribosome. Forms the main docking site for trigger factor binding to the ribosome. The protein is Large ribosomal subunit protein uL23 of Mannheimia succiniciproducens (strain KCTC 0769BP / MBEL55E).